The following is a 153-amino-acid chain: Small ribosomal subunit protein bS16 (153 aa).

The tract at residues 114–153 (ENEPVGEAITPKKKKAKAEDAEAAADAPAEAAAESEAADK) is disordered. The span at 137 to 153 (AADAPAEAAAESEAADK) shows a compositional bias: low complexity.

Belongs to the bacterial ribosomal protein bS16 family.

The protein is Small ribosomal subunit protein bS16 of Rhodococcus jostii (strain RHA1).